The primary structure comprises 112 residues: uncharacterized protein (112 aa).

Residues 1-25 (MKGTKLAVVVGMTVAAVSLAAPAQA) form the signal peptide.

This is an uncharacterized protein from Mycobacterium tuberculosis (strain CDC 1551 / Oshkosh).